The following is a 578-amino-acid chain: L-ascorbate oxidase (578 aa).

Positions 1–28 (MASLGFLFFFLLPLILLELSSSRSVMAA) are cleaved as a signal peptide. 2 consecutive Plastocyanin-like domains span residues 30-149 (TRHF…LIVE) and 161-328 (DGEF…NYLP). The Cu cation site is built by His-87, His-89, His-131, and His-133. 2 disulfides stabilise this stretch: Cys-108–Cys-565 and Cys-207–Cys-221. Asn-206 carries N-linked (GlcNAc...) asparagine glycosylation. 4 N-linked (GlcNAc...) asparagine glycosylation sites follow: Asn-349, Asn-394, Asn-438, and Asn-451. The Plastocyanin-like 3 domain occupies 372 to 550 (HRRIILLNTQ…HMGMGVIFAE (179 aa)). His-472, His-475, His-477, His-533, Cys-534, His-535, His-539, and Met-544 together coordinate Cu cation.

This sequence belongs to the multicopper oxidase family. In terms of assembly, dimer. Cu cation is required as a cofactor. Highly expressed in young and growing tissues.

Its subcellular location is the secreted. It carries out the reaction 4 L-ascorbate + O2 = 4 monodehydro-L-ascorbate radical + 2 H2O. Its function is as follows. May be involved in a redox system involving ascorbic acid. The sequence is that of L-ascorbate oxidase (AAO) from Nicotiana tabacum (Common tobacco).